Here is a 420-residue protein sequence, read N- to C-terminus: Tyrosine--tRNA ligase (420 aa).

Residue Y36 coordinates L-tyrosine. The 'HIGH' region motif lies at 41 to 50 (PTADSLHIGH). L-tyrosine-binding residues include Y170 and Q174. The 'KMSKS' region motif lies at 231–235 (KFGKT). Residue K234 participates in ATP binding. The region spanning 353 to 420 (RNIVEVIVET…KKKYFMVNYK (68 aa)) is the S4 RNA-binding domain.

This sequence belongs to the class-I aminoacyl-tRNA synthetase family. TyrS type 1 subfamily. Homodimer.

It is found in the cytoplasm. The catalysed reaction is tRNA(Tyr) + L-tyrosine + ATP = L-tyrosyl-tRNA(Tyr) + AMP + diphosphate + H(+). In terms of biological role, catalyzes the attachment of tyrosine to tRNA(Tyr) in a two-step reaction: tyrosine is first activated by ATP to form Tyr-AMP and then transferred to the acceptor end of tRNA(Tyr). The polypeptide is Tyrosine--tRNA ligase (Staphylococcus saprophyticus subsp. saprophyticus (strain ATCC 15305 / DSM 20229 / NCIMB 8711 / NCTC 7292 / S-41)).